Reading from the N-terminus, the 424-residue chain is Probable serine/threonine-protein kinase PBL15 (424 aa).

Positions 99-380 (FSGNYLLGEG…AVVEALESLI (282 aa)) constitute a Protein kinase domain. ATP is bound by residues 105–113 (LGEGGFGKV) and K134. Phosphotyrosine is present on Y179. D229 functions as the Proton acceptor in the catalytic mechanism. At S233 the chain carries Phosphoserine. Residues T264 and T269 each carry the phosphothreonine modification. Y277 is modified (phosphotyrosine). The tract at residues 390–424 (GHWPLSPKSQGGKVSPKVRGDHRSGRKSAPGSLRS) is disordered.

This sequence belongs to the protein kinase superfamily. Ser/Thr protein kinase family. In terms of assembly, interacts with the Xanthomonas campestris effector XopAC/AvrAC.

The protein resides in the cell membrane. The catalysed reaction is L-seryl-[protein] + ATP = O-phospho-L-seryl-[protein] + ADP + H(+). It catalyses the reaction L-threonyl-[protein] + ATP = O-phospho-L-threonyl-[protein] + ADP + H(+). Its function is as follows. May be involved in plant defense signaling. The protein is Probable serine/threonine-protein kinase PBL15 of Arabidopsis thaliana (Mouse-ear cress).